The following is a 366-amino-acid chain: 3-dehydroquinate synthase (366 aa).

NAD(+) contacts are provided by residues 74–79 (SGEAAK), 108–112 (GVVGD), 132–133 (TT), Lys-144, Lys-153, and 171–174 (FLRT). Zn(2+) contacts are provided by Glu-186, His-249, and His-266.

This sequence belongs to the sugar phosphate cyclases superfamily. Dehydroquinate synthase family. Requires Co(2+) as cofactor. Zn(2+) serves as cofactor. NAD(+) is required as a cofactor.

The protein localises to the cytoplasm. It catalyses the reaction 7-phospho-2-dehydro-3-deoxy-D-arabino-heptonate = 3-dehydroquinate + phosphate. It functions in the pathway metabolic intermediate biosynthesis; chorismate biosynthesis; chorismate from D-erythrose 4-phosphate and phosphoenolpyruvate: step 2/7. Its function is as follows. Catalyzes the conversion of 3-deoxy-D-arabino-heptulosonate 7-phosphate (DAHP) to dehydroquinate (DHQ). In Geobacillus kaustophilus (strain HTA426), this protein is 3-dehydroquinate synthase.